Reading from the N-terminus, the 443-residue chain is Thymidine phosphorylase (443 aa).

Belongs to the thymidine/pyrimidine-nucleoside phosphorylase family. In terms of assembly, homodimer.

It catalyses the reaction thymidine + phosphate = 2-deoxy-alpha-D-ribose 1-phosphate + thymine. It participates in pyrimidine metabolism; dTMP biosynthesis via salvage pathway; dTMP from thymine: step 1/2. In terms of biological role, the enzymes which catalyze the reversible phosphorolysis of pyrimidine nucleosides are involved in the degradation of these compounds and in their utilization as carbon and energy sources, or in the rescue of pyrimidine bases for nucleotide synthesis. This Shewanella piezotolerans (strain WP3 / JCM 13877) protein is Thymidine phosphorylase.